We begin with the raw amino-acid sequence, 885 residues long: Alanine--tRNA ligase (885 aa).

Zn(2+)-binding residues include H563, H567, C677, and H681. Residues L848 to A868 form a disordered region.

Belongs to the class-II aminoacyl-tRNA synthetase family. Zn(2+) is required as a cofactor.

It localises to the cytoplasm. It catalyses the reaction tRNA(Ala) + L-alanine + ATP = L-alanyl-tRNA(Ala) + AMP + diphosphate. Its function is as follows. Catalyzes the attachment of alanine to tRNA(Ala) in a two-step reaction: alanine is first activated by ATP to form Ala-AMP and then transferred to the acceptor end of tRNA(Ala). Also edits incorrectly charged Ser-tRNA(Ala) and Gly-tRNA(Ala) via its editing domain. The polypeptide is Alanine--tRNA ligase (Paracoccus denitrificans (strain Pd 1222)).